A 437-amino-acid chain; its full sequence is MPVPELPPPRSSLPEAVTRFGASVLGAVAARAHDSEATVGGPSGGRPLPSPPAGLSFGPPSPAAPPTDVPAPEAPGWGADLERLLCGPHGLGTAGLRLTPGKERPVPATAREGRPIPGLYHHPVPEPDEARVEEVSRRIKAWALDEVSLYPEEWEEQFDGFSVGRYMVGCHPDAPTVDHLMLATRLMVAENAVDDCYCEDHGGSPVGLGERLLLAHTALDPLYTAREYQPGWAASLHADAPRRAYRSAMDYFVRAAGPSQADRLRHDMARLHLGYLAEAAWAQQDQVPEVWEYLAMRQFNNFRPCPTITDTVGGYELPADLHAQAAMQKVIALASNATTIVNDLYSYTKELAAPGRHLNLPVVIAEREGLSDQDAYLKSVEIHNELMHAFESEAAALAAACPVPSVQRFLRGVAAWVDGNHHWHRSNTYRYSLPDFW.

The tract at residues 32–125 is disordered; the sequence is AHDSEATVGG…IPGLYHHPVP (94 aa). Residues 59-73 show a composition bias toward pro residues; sequence PPSPAAPPTDVPAPE. Mg(2+) contacts are provided by D194, D195, E199, N342, S346, and E350.

Belongs to the terpene synthase family. 2-methylisoborneol synthase subfamily. The cofactor is Mg(2+).

It catalyses the reaction (E)-2-methylgeranyl diphosphate + H2O = 2-methylisoborneol + diphosphate. Functionally, catalyzes the cyclization of 2-methylgeranyl diphosphate (2-MeGPP) to 2-methylisoborneol (2-MIB), which likely involves the intermediacy of 2-methyllinalyl diphosphate. This Streptomyces griseus protein is 2-methylisoborneol synthase.